The chain runs to 398 residues: Succinyl-diaminopimelate desuccinylase (398 aa).

H73 is a Zn(2+) binding site. Residue D75 is part of the active site. Residue D106 participates in Zn(2+) binding. The Proton acceptor role is filled by E140. Positions 141, 169, and 366 each coordinate Zn(2+).

It belongs to the peptidase M20A family. DapE subfamily. In terms of assembly, homodimer. It depends on Zn(2+) as a cofactor. Co(2+) is required as a cofactor.

It carries out the reaction N-succinyl-(2S,6S)-2,6-diaminopimelate + H2O = (2S,6S)-2,6-diaminopimelate + succinate. It functions in the pathway amino-acid biosynthesis; L-lysine biosynthesis via DAP pathway; LL-2,6-diaminopimelate from (S)-tetrahydrodipicolinate (succinylase route): step 3/3. Catalyzes the hydrolysis of N-succinyl-L,L-diaminopimelic acid (SDAP), forming succinate and LL-2,6-diaminopimelate (DAP), an intermediate involved in the bacterial biosynthesis of lysine and meso-diaminopimelic acid, an essential component of bacterial cell walls. This Agrobacterium fabrum (strain C58 / ATCC 33970) (Agrobacterium tumefaciens (strain C58)) protein is Succinyl-diaminopimelate desuccinylase.